We begin with the raw amino-acid sequence, 194 residues long: dCTP deaminase (194 aa).

DCTP contacts are provided by residues 110 to 115, Asp-128, 136 to 138, Tyr-171, Lys-178, and Gln-182; these read RSSLAR and VLE. Glu-138 acts as the Proton donor/acceptor in catalysis.

This sequence belongs to the dCTP deaminase family. In terms of assembly, homotrimer.

The catalysed reaction is dCTP + H2O + H(+) = dUTP + NH4(+). Its pathway is pyrimidine metabolism; dUMP biosynthesis; dUMP from dCTP (dUTP route): step 1/2. Its function is as follows. Catalyzes the deamination of dCTP to dUTP. The chain is dCTP deaminase from Psychromonas ingrahamii (strain DSM 17664 / CCUG 51855 / 37).